A 1274-amino-acid polypeptide reads, in one-letter code: Myosin-binding protein C, cardiac-type (1274 aa).

At Met-1 the chain carries N-acetylmethionine. Ser-47 carries the post-translational modification Phosphoserine. A compositionally biased stretch (low complexity) spans 107–141; sequence APAPAEATGAPGEAPAPAAELGESAPSPKGSSSAA. A disordered region spans residues 107-153; it reads APAPAEATGAPGEAPAPAAELGESAPSPKGSSSAALNGPTPGAPDDP. Positions 153–256 constitute an Ig-like C2-type 1 domain; that stretch reads PIGLFVMRPQ…FDCSNFNLTV (104 aa). Positions 208, 210, 223, and 225 each coordinate Zn(2+). Phosphoserine; by PKA and PKC occurs at positions 275, 284, and 304. A phosphoserine mark is found at Ser-311 and Ser-427. 4 Ig-like C2-type domains span residues 362-452, 453-543, 544-633, and 645-771; these read STAF…VKEP, PVLI…VQEK, KLEV…HFME, and PKIH…VIDV. Cys-436 and Cys-443 form a disulfide bridge. Ser-550 carries the post-translational modification Phosphoserine. Thr-607 is subject to Phosphothreonine. 2 consecutive Fibronectin type-III domains span residues 774 to 870 and 872 to 967; these read APAA…IGPP and EPTH…VQEI. The Ig-like C2-type 6 domain maps to 971–1065; sequence PRLQLPRHLR…ATLVLQVVDK (95 aa). The 96-residue stretch at 1068–1163 folds into the Fibronectin type-III 3 domain; it reads PPQDLRVTDA…TKEPVFIPRP (96 aa). Residues 1181-1274 enclose the Ig-like C2-type 7 domain; it reads PSFTQPLVNR…ECRLEVRVPQ (94 aa). Position 1241 is an omega-N-methylarginine (Arg-1241).

Belongs to the immunoglobulin superfamily. MyBP family. Substrate for phosphorylation by PKA and PKC. Reversible phosphorylation appears to modulate contraction. Post-translationally, polyubiquitinated.

In terms of biological role, thick filament-associated protein located in the crossbridge region of vertebrate striated muscle a bands. In vitro it binds MHC, F-actin and native thin filaments, and modifies the activity of actin-activated myosin ATPase. It may modulate muscle contraction or may play a more structural role. This is Myosin-binding protein C, cardiac-type (MYBPC3) from Homo sapiens (Human).